We begin with the raw amino-acid sequence, 1382 residues long: Suppressor of organelle fusion 2 (1382 aa).

The BEACH domain maps to 229-463; that stretch reads RIPLDEATSN…QLFNRPHPIR (235 aa). WD repeat units follow at residues 1094-1133 and 1140-1176; these read GHQE…DEIG and KHTR…LLAQ.

Belongs to the WD repeat WDR81 family. Interacts with sorf-1; the interaction is direct. Interacts with bec-1.

It localises to the early endosome. Its subcellular location is the late endosome. The protein resides in the cytoplasm. Its function is as follows. Together with sorf-1 negatively regulates the levels of phosphatidylinositol 3-phosphate (PtdIns3P) to enable the conversion of early endosomes to late endosomes. Binds to sorf-1 and the sorf-1-sorf-2 complex likely acts through bec-1, a non-catalytic subunit of phosphatidylinositol 3-kinase (PI3K), to suppress PI3K activity, thereby negatively regulating endosomal PtdIns3P levels. This chain is Suppressor of organelle fusion 2, found in Caenorhabditis elegans.